Here is a 361-residue protein sequence, read N- to C-terminus: 3-dehydroquinate synthase (361 aa).

NAD(+)-binding positions include 104–108 (GVIGD), 128–129 (TT), lysine 141, lysine 150, and 168–171 (FLRT). Zn(2+) is bound by residues glutamate 183, histidine 246, and histidine 263.

This sequence belongs to the sugar phosphate cyclases superfamily. Dehydroquinate synthase family. Co(2+) is required as a cofactor. It depends on Zn(2+) as a cofactor. Requires NAD(+) as cofactor.

Its subcellular location is the cytoplasm. The catalysed reaction is 7-phospho-2-dehydro-3-deoxy-D-arabino-heptonate = 3-dehydroquinate + phosphate. It participates in metabolic intermediate biosynthesis; chorismate biosynthesis; chorismate from D-erythrose 4-phosphate and phosphoenolpyruvate: step 2/7. Its function is as follows. Catalyzes the conversion of 3-deoxy-D-arabino-heptulosonate 7-phosphate (DAHP) to dehydroquinate (DHQ). The protein is 3-dehydroquinate synthase of Opitutus terrae (strain DSM 11246 / JCM 15787 / PB90-1).